A 426-amino-acid chain; its full sequence is Glutamyl-tRNA reductase (426 aa).

Substrate contacts are provided by residues 49–52 (TCNR), S101, 106–108 (EPQ), and Q112. C50 functions as the Nucleophile in the catalytic mechanism. Residue 181 to 186 (GAGETI) coordinates NADP(+). Residues 404–426 (DRLFPEKPGLPTSPHSYPDREDR) are disordered.

Belongs to the glutamyl-tRNA reductase family. As to quaternary structure, homodimer.

It catalyses the reaction (S)-4-amino-5-oxopentanoate + tRNA(Glu) + NADP(+) = L-glutamyl-tRNA(Glu) + NADPH + H(+). It participates in porphyrin-containing compound metabolism; protoporphyrin-IX biosynthesis; 5-aminolevulinate from L-glutamyl-tRNA(Glu): step 1/2. Catalyzes the NADPH-dependent reduction of glutamyl-tRNA(Glu) to glutamate 1-semialdehyde (GSA). The chain is Glutamyl-tRNA reductase from Xanthomonas campestris pv. phaseoli.